The primary structure comprises 240 residues: UDP-2,3-diacylglucosamine hydrolase (240 aa).

Positions 7, 9, 40, 78, and 113 each coordinate Mn(2+). A substrate-binding site is contributed by 78–79; it reads NR. The substrate site is built by aspartate 121, serine 159, threonine 163, lysine 166, and histidine 194. The Mn(2+) site is built by histidine 194 and histidine 196.

Belongs to the LpxH family. Mn(2+) is required as a cofactor.

It is found in the cell inner membrane. It catalyses the reaction UDP-2-N,3-O-bis[(3R)-3-hydroxytetradecanoyl]-alpha-D-glucosamine + H2O = 2-N,3-O-bis[(3R)-3-hydroxytetradecanoyl]-alpha-D-glucosaminyl 1-phosphate + UMP + 2 H(+). It participates in glycolipid biosynthesis; lipid IV(A) biosynthesis; lipid IV(A) from (3R)-3-hydroxytetradecanoyl-[acyl-carrier-protein] and UDP-N-acetyl-alpha-D-glucosamine: step 4/6. In terms of biological role, hydrolyzes the pyrophosphate bond of UDP-2,3-diacylglucosamine to yield 2,3-diacylglucosamine 1-phosphate (lipid X) and UMP by catalyzing the attack of water at the alpha-P atom. Involved in the biosynthesis of lipid A, a phosphorylated glycolipid that anchors the lipopolysaccharide to the outer membrane of the cell. In Stutzerimonas stutzeri (strain A1501) (Pseudomonas stutzeri), this protein is UDP-2,3-diacylglucosamine hydrolase.